Here is a 196-residue protein sequence, read N- to C-terminus: Glycerol-3-phosphate acyltransferase (196 aa).

A run of 4 helical transmembrane segments spans residues 5–25, 70–90, 111–131, and 152–172; these read GLIAFAFGYLLGSIPFGMILT, VVIALLLSGPGAAMAATLGAF, IGVLLGLFWPAALAFCAIWLL, and LLLWGFGHPQFALLFAVLTVL.

The protein belongs to the PlsY family. As to quaternary structure, probably interacts with PlsX.

It is found in the cell inner membrane. The enzyme catalyses an acyl phosphate + sn-glycerol 3-phosphate = a 1-acyl-sn-glycero-3-phosphate + phosphate. It functions in the pathway lipid metabolism; phospholipid metabolism. Catalyzes the transfer of an acyl group from acyl-phosphate (acyl-PO(4)) to glycerol-3-phosphate (G3P) to form lysophosphatidic acid (LPA). This enzyme utilizes acyl-phosphate as fatty acyl donor, but not acyl-CoA or acyl-ACP. The chain is Glycerol-3-phosphate acyltransferase from Nitrobacter winogradskyi (strain ATCC 25391 / DSM 10237 / CIP 104748 / NCIMB 11846 / Nb-255).